The sequence spans 424 residues: Type II methyltransferase M.BspRI (424 aa).

The 351-residue stretch at F58–Y408 folds into the SAM-dependent MTase C5-type domain. The active-site S-methylcysteine intermediate is C156. C181 is subject to S-methylcysteine; by autocatalysis.

It belongs to the class I-like SAM-binding methyltransferase superfamily. C5-methyltransferase family. In terms of assembly, monomer. In the absence of DNA, can self-methylate two cysteine residues.

The enzyme catalyses a 2'-deoxycytidine in DNA + S-adenosyl-L-methionine = a 5-methyl-2'-deoxycytidine in DNA + S-adenosyl-L-homocysteine + H(+). Functionally, a methylase, recognizes the double-stranded sequence 5'-GGCC-3', methylates C-3 on both strands, and protects the DNA from cleavage by the BspRI endonuclease. In Lysinibacillus sphaericus (Bacillus sphaericus), this protein is Type II methyltransferase M.BspRI (bspRIM).